The sequence spans 447 residues: Cysteine--tRNA ligase (447 aa).

Residue Cys-28 participates in Zn(2+) binding. The 'HIGH' region motif lies at 30–40 (PTVYNYIHIGN). Cys-211, His-236, and Glu-240 together coordinate Zn(2+). The 'KMSKS' region motif lies at 268–272 (KMSKS). Residue Lys-271 participates in ATP binding.

The protein belongs to the class-I aminoacyl-tRNA synthetase family. Monomer. It depends on Zn(2+) as a cofactor.

It localises to the cytoplasm. The catalysed reaction is tRNA(Cys) + L-cysteine + ATP = L-cysteinyl-tRNA(Cys) + AMP + diphosphate. This is Cysteine--tRNA ligase from Streptococcus pyogenes serotype M3 (strain ATCC BAA-595 / MGAS315).